A 304-amino-acid polypeptide reads, in one-letter code: E3 ubiquitin-protein ligase CHIP (304 aa).

Residues 1 to 10 (MKGKEEKEGG) show a composition bias toward basic and acidic residues. The interval 1–30 (MKGKEEKEGGARLGTGGGGSPDKSPSAQEL) is disordered. Residue lysine 2 forms a Glycyl lysine isopeptide (Lys-Gly) (interchain with G-Cter in ubiquitin) linkage. Positions 11-20 (ARLGTGGGGS) are enriched in gly residues. The residue at position 20 (serine 20) is a Phosphoserine. Lysine 23 participates in a covalent cross-link: Glycyl lysine isopeptide (Lys-Gly) (interchain with G-Cter in ubiquitin). Phosphoserine occurs at positions 24 and 26. 3 TPR repeats span residues 27–60 (AQEL…NPLV), 61–94 (AVYY…DGQS), and 96–128 (KAHF…AKEQ). Residues 102–201 (GQCQLEMESY…GHIRAQQACI (100 aa)) form a required for interaction with MAPK7 region. Positions 143–197 (AKKKRWNSIEERRIHQESELHSYLTRLIAAERERELEECQRNHEGDEDDGHIRAQ) are required for interaction with and ubiquitination of MYOCD. The segment at 144–198 (KKKRWNSIEERRIHQESELHSYLTRLIAAERERELEECQRNHEGDEDDGHIRAQQ) is required for interaction with FOXO1. Positions 144–304 (KKKRWNSIEE…ISENGWVEDY (161 aa)) are required for ubiquitination of FOXO1. Residue serine 150 is modified to Phosphoserine. Residues lysine 222 and lysine 256 each participate in a glycyl lysine isopeptide (Lys-Gly) (interchain with G-Cter in ubiquitin) cross-link. The U-box domain occupies 227-301 (DIPDYLCGKI…DAFISENGWV (75 aa)). Serine 274 carries the phosphoserine modification.

Homodimer. Interacts with BAG2, and with the E2 ubiquitin conjugating enzymes UBE2D1, UBE2D2 and UBE2D3. Detected in a ternary complex containing STUB1, HSPA1A and HSPBP1. Part of a complex composed of STUB1/CHIP, VCP/p97, CHRNA3, and UBXN2A that modulates the ubiquitination and endoplasmic reticulum-associated degradation (ERAD) of CHRNA3. Within the complex UBXN2A acts as a scaffold protein required for the interaction of CHRNA3 with VCP/p97, this interaction also inhibits CHRNA3 ubiquitination by STUB1/CHIP and subsequently ERAD. Interacts with MKKS. Interacts with DNAAF4. Interacts (via the U-box domain) with the UBE2V2-UBE2N heterodimer; the complex has a specific 'Lys-63'-linked polyubiquitination activity. Interacts (when monoubiquitinated) with ATXN3. Interacts with UBE2W. Interacts with DNAJB6. Interacts with FLCN and HSP90AA1. Interacts with HSP90. Interacts with UBE2N and UBE2V1. Interacts (via TPR repeats) with HSPA8 (via C-terminus). Interacts (via TPR repeats) with HSPA1A (via C-terminus). Interacts with the non-acetylated form of HSPA1A and HSPA1B. Interacts with SMAD3 and HSP90AB1. Interacts with UBE4B. Interacts with PRMT5. Interacts with MYOCD (via C-terminus). Interacts with FOXO1 (when phosphorylated on 'Ser-250'). Interacts with MAPK7/ERK5; the interaction is enhanced in the presence of IGF1 or MAP2K5 and promotes STUB1/CHIP E3 ligase activity. Interacts with and ubiquitinates ESR1; the interaction is promoted in the absence of estradiol (17-beta-estradiol/E2). Interacts with ESR2. Interacts with and ubiquitinates NFATC3; HSPA1A/HSP70 is required as a co-chaperone. In macrophages, interacts with PAQR3; the interaction promotes PPARG poylubiquitination and STUB1-mediated degradation. Component of the chaperone-assisted selective autophagy (CASA) complex consisting of BAG3, HSPA8/HSC70, HSPB8 and STUB1/CHIP. Post-translationally, auto-ubiquitinated; mediated by UBE2D1 and UBE2D2 and enhanced in the presence of MAP2K5. Monoubiquitinated at Lys-2 following cell stress by UBE2W, promoting the interaction with ATXN3. Expressed in the adventitia layer of the carotid artery (at protein level). Expressed in the CA1 region of the hippocampus (at protein level). Expressed in the uterus (at protein level).

It localises to the cytoplasm. The protein resides in the nucleus. The protein localises to the mitochondrion. The enzyme catalyses S-ubiquitinyl-[E2 ubiquitin-conjugating enzyme]-L-cysteine + [acceptor protein]-L-lysine = [E2 ubiquitin-conjugating enzyme]-L-cysteine + N(6)-ubiquitinyl-[acceptor protein]-L-lysine.. It participates in protein modification; protein ubiquitination. Functionally, E3 ubiquitin-protein ligase which targets misfolded chaperone substrates towards proteasomal degradation. Plays a role in the maintenance of mitochondrial morphology and promotes mitophagic removal of dysfunctional mitochondria; thereby acts as a protector against apoptosis in response to cellular stress. Negatively regulates vascular smooth muscle contraction, via degradation of the transcriptional activator MYOCD and subsequent loss of transcription of genes involved in vascular smooth muscle contraction. Promotes survival and proliferation of cardiac smooth muscle cells via ubiquitination and degradation of FOXO1, resulting in subsequent repression of FOXO1-mediated transcription of pro-apoptotic genes. Ubiquitinates ICER-type isoforms of CREM and targets them for proteasomal degradation, thereby acts as a positive effector of MAPK/ERK-mediated inhibition of apoptosis in cardiomyocytes. Inhibits lipopolysaccharide-induced apoptosis and hypertrophy in cardiomyocytes, via ubiquitination and subsequent proteasomal degradation of NFATC3. Collaborates with ATXN3 in the degradation of misfolded chaperone substrates: ATXN3 restricting the length of ubiquitin chain attached to STUB1/CHIP substrates and preventing further chain extension. Ubiquitinates NOS1 in concert with Hsp70 and Hsp40. Modulates the activity of several chaperone complexes, including Hsp70, Hsc70 and Hsp90. Ubiquitinates CHRNA3 targeting it for endoplasmic reticulum-associated degradation in cortical neurons, as part of the STUB1-VCP-UBXN2A complex. Ubiquitinates and promotes ESR1 proteasomal degradation in response to age-related circulating estradiol (17-beta-estradiol/E2) decline, thereby promotes neuronal apoptosis in response to ischemic reperfusion injury. Mediates transfer of non-canonical short ubiquitin chains to HSPA8 that have no effect on HSPA8 degradation. Mediates polyubiquitination of DNA polymerase beta (POLB) at 'Lys-41', 'Lys-61' and 'Lys-81', thereby playing a role in base-excision repair: catalyzes polyubiquitination by amplifying the HUWE1/ARF-BP1-dependent monoubiquitination and leading to POLB-degradation by the proteasome. Mediates polyubiquitination of CYP3A4. Ubiquitinates EPHA2 and may regulate the receptor stability and activity through proteasomal degradation. Acts as a co-chaperone for HSPA1A and HSPA1B chaperone proteins and promotes ubiquitin-mediated protein degradation. Negatively regulates the suppressive function of regulatory T-cells (Treg) during inflammation by mediating the ubiquitination and degradation of FOXP3 in a HSPA1A/B-dependent manner. Catalyzes monoubiquitination of SIRT6, preventing its degradation by the proteasome. Likely mediates polyubiquitination and down-regulates plasma membrane expression of PD-L1/CD274, an immune inhibitory ligand critical for immune tolerance to self and antitumor immunity. Negatively regulates TGF-beta signaling by modulating the basal level of SMAD3 via ubiquitin-mediated degradation. Plays a role in the degradation of TP53. Mediates ubiquitination of RIPK3 leading to its subsequent proteasome-dependent degradation. May regulate myosin assembly in striated muscles together with UBE4B and VCP/p97 by targeting myosin chaperone UNC45B for proteasomal degradation. Ubiquitinates PPARG in macrophages playing a role in M2 macrophages polarization and angiogenesis. The polypeptide is E3 ubiquitin-protein ligase CHIP (Rattus norvegicus (Rat)).